Reading from the N-terminus, the 187-residue chain is MDIDPYKEFGSSYQLLNFLPLDFFPDLNALVDTATALYEEELTGREHCSPHHTAIRQALVCWDELTKLIAWMSSNITSEQVRTIIVNHVNDTWGLKVRQSLWFHLSCLTFGQHTVQEFLVSFVVWIRTPAPYRPPNAPILSTLPEHTVIRRGGARASRSPRRRTPSPRRRRSQSPRRRRSQSPSANC.

Residues 150–187 (RRGGARASRSPRRRTPSPRRRRSQSPRRRRSQSPSANC) are disordered. Residues 158–180 (RSPRRRTPSPRRRRSQSPRRRRS) show a composition bias toward basic residues. Residues Ser-159, Ser-166, and Ser-174 each carry the phosphoserine; by host modification. One copy of the 1; half-length repeat lies at 159–165 (SPRRRTP). The segment at 159-181 (SPRRRTPSPRRRRSQSPRRRRSQ) is 3 X 8 AA repeats of S-P-R-R-R-[PR]-S-Q. Positions 162-179 (RRTPSPRRRRSQSPRRRR) match the Bipartite nuclear localization signal motif. A run of 2 repeats spans residues 166–173 (SPRRRRSQ) and 174–181 (SPRRRRSQ). Residues 181–187 (QSPSANC) form an RNA binding region.

This sequence belongs to the orthohepadnavirus core antigen family. Homodimerizes, then multimerizes. Interacts with cytosol exposed regions of viral L glycoprotein present in the reticulum-to-Golgi compartment. Interacts with human FLNB. Phosphorylated form interacts with host importin alpha; this interaction depends on the exposure of the NLS, which itself depends upon genome maturation and/or phosphorylation of the capsid protein. Interacts with host NUP153. In terms of processing, phosphorylated by host SRPK1, SRPK2, and maybe protein kinase C or GAPDH. Phosphorylation is critical for pregenomic RNA packaging. Protein kinase C phosphorylation is stimulated by HBx protein and may play a role in transport of the viral genome to the nucleus at the late step during the viral replication cycle.

It is found in the virion. It localises to the host cytoplasm. Self assembles to form an icosahedral capsid. Most capsids appear to be large particles with an icosahedral symmetry of T=4 and consist of 240 copies of capsid protein, though a fraction forms smaller T=3 particles consisting of 180 capsid proteins. Entering capsids are transported along microtubules to the nucleus. Phosphorylation of the capsid is thought to induce exposure of nuclear localization signal in the C-terminal portion of the capsid protein that allows binding to the nuclear pore complex via the importin (karyopherin-) alpha and beta. Capsids are imported in intact form through the nuclear pore into the nuclear basket, where it probably binds NUP153. Only capsids that contain the mature viral genome can release the viral DNA and capsid protein into the nucleoplasm. Immature capsids get stuck in the basket. Capsids encapsulate the pre-genomic RNA and the P protein. Pre-genomic RNA is reverse-transcribed into DNA while the capsid is still in the cytoplasm. The capsid can then either be directed to the nucleus, providing more genomes for transcription, or bud through the endoplasmic reticulum to provide new virions. This Marmota monax (Woodchuck) protein is Capsid protein.